A 218-amino-acid polypeptide reads, in one-letter code: Ras-related protein RABA5e (218 aa).

Residue 19 to 26 coordinates GTP; the sequence is GDSAVGKS. The Effector region motif lies at 41 to 49; it reads SKATIGVEF. GTP is bound by residues 67 to 71, 125 to 128, and 155 to 156; these read DTAGQ, NKCD, and SA. S-geranylgeranyl cysteine attachment occurs at residues cysteine 214 and cysteine 215. The residue at position 215 (cysteine 215) is a Cysteine methyl ester. The propeptide at 216–218 is removed in mature form; it reads SST.

This sequence belongs to the small GTPase superfamily. Rab family.

The protein resides in the cell membrane. In terms of biological role, intracellular vesicle trafficking and protein transport. This Arabidopsis thaliana (Mouse-ear cress) protein is Ras-related protein RABA5e (RABA5E).